Consider the following 247-residue polypeptide: MSRFKLTLEYDGSNYAGWQRQAKLHTIQGALEQAIFRFSGQQLTITTAGRTDAGVHATGQVAHVDFIKNWPPHTVRDALNALLRQQSEAISILNVENVPDDFDARFSAIKRHYLFKILNRRSPPALNAKRVWWIPKPLNAQAMHEAAQKLVGQHDFTTFRSAHCQAKSPIRTLERLDIQKEGEEIFIYAKARSFLHHQIRSFAGSLMEVGIGRWTAQDLEAALHAKDRKRCGVVAPPSGLYLTKVEY.

Aspartate 52 functions as the Nucleophile in the catalytic mechanism. A substrate-binding site is contributed by tyrosine 113.

The protein belongs to the tRNA pseudouridine synthase TruA family. Homodimer.

It carries out the reaction uridine(38/39/40) in tRNA = pseudouridine(38/39/40) in tRNA. Formation of pseudouridine at positions 38, 39 and 40 in the anticodon stem and loop of transfer RNAs. The protein is tRNA pseudouridine synthase A of Bartonella tribocorum (strain CIP 105476 / IBS 506).